Here is a 286-residue protein sequence, read N- to C-terminus: Thymidylate synthase (286 aa).

A dUMP-binding site is contributed by 140 to 141 (RR). The Nucleophile role is filled by C161. Residues 185 to 188 (RSND), N196, and 226 to 228 (HIY) contribute to the dUMP site. D188 provides a ligand contact to (6R)-5,10-methylene-5,6,7,8-tetrahydrofolate. A285 provides a ligand contact to (6R)-5,10-methylene-5,6,7,8-tetrahydrofolate.

Belongs to the thymidylate synthase family. Bacterial-type ThyA subfamily. Homodimer.

Its subcellular location is the cytoplasm. The catalysed reaction is dUMP + (6R)-5,10-methylene-5,6,7,8-tetrahydrofolate = 7,8-dihydrofolate + dTMP. Its pathway is pyrimidine metabolism; dTTP biosynthesis. Catalyzes the reductive methylation of 2'-deoxyuridine-5'-monophosphate (dUMP) to 2'-deoxythymidine-5'-monophosphate (dTMP) while utilizing 5,10-methylenetetrahydrofolate (mTHF) as the methyl donor and reductant in the reaction, yielding dihydrofolate (DHF) as a by-product. This enzymatic reaction provides an intracellular de novo source of dTMP, an essential precursor for DNA biosynthesis. This is Thymidylate synthase from Streptococcus thermophilus (strain ATCC BAA-250 / LMG 18311).